Here is a 345-residue protein sequence, read N- to C-terminus: Arginase (345 aa).

Over residues methionine 1 to serine 16 the composition is skewed to basic and acidic residues. The segment at methionine 1–phenylalanine 34 is disordered. The Mn(2+) site is built by isoleucine 101, histidine 124, serine 126, glycine 128, isoleucine 232, and cysteine 234.

This sequence belongs to the arginase family. As to quaternary structure, homotrimer. Requires Mn(2+) as cofactor.

It catalyses the reaction L-arginine + H2O = urea + L-ornithine. Its pathway is nitrogen metabolism; urea cycle; L-ornithine and urea from L-arginine: step 1/1. Its activity is regulated as follows. The enzyme activity is increased in the range of 20-50% upon the addition of Mn(2+) (1 mM), Co(2+) (1 mM), Ni(2+) (1 and 5 mM) and K(+) (5 mM). In contrast, the addition of Cu(2+), Zn(2+), Ca(2+), Mg(2+), Fe(2+) (both 1 and 5 mM), and Co(2+) (5 mM) strongly suppresses the arginase activity. SDS (1%) and EDTA (1 mM) are the most potent inhibitors. Reducing agents DTT (1 mM), PMSF (1 mM) and beta-mercaptoethanol (1 mM) also significantly inhibit activity by 85%, 64% and 35%, respectively. Surfactants Triton X-100 (1%), Tween-80 (1%) and Tween-20 (1%) are more tolerant, showing a slight decrease of arginase activity in the range of 10-30%. Functionally, cold-active L-arginase that catalyzes the hydrolysis of L-arginine to L-ornithine and urea, an essential reaction in the urea cycle for toxic ammonia removal and cell proliferation. Is not able to use D-arginine or L-canavanine as substrates. The chain is Arginase from Glaciozyma antarctica (strain PI12) (Antarctic psychrophilic yeast).